Consider the following 383-residue polypeptide: MSHNAIRPWRNIYRRKSRQIHVGPVPIGGDAPIAVQTMTNTLTTDIPGTIAQVQAAADAGADIVRVSVPDVDSSRALKEIVRESPVPIVADIHFHYKRGIEAAEAGAACLRINPGNIGDEKRVKEVIKAARDNNCSMRIGVNAGSLEKHLLDKYAEPCPEAMVESALDHIKILQDNDFHEFKISCKASDVFLSAAAYQALADATDAPLHLGITEAGGLMSGTIKSAIGLGNLLWMGIGDTIRVSLSADPVEEIKVGYDILKSLGLRHRGVNVISCPSCARQGFDVIKTVEALEQRLEHIKTPMSLSIIGCVVNGPGEALMTDVGFTGGGAGSGMVYLAGKQSHKMSNEQMIDHIVEQVEKRAAELDAIEAAEAAQDAAREPAE.

Cys-275, Cys-278, Cys-310, and Glu-317 together coordinate [4Fe-4S] cluster.

This sequence belongs to the IspG family. The cofactor is [4Fe-4S] cluster.

It carries out the reaction (2E)-4-hydroxy-3-methylbut-2-enyl diphosphate + oxidized [flavodoxin] + H2O + 2 H(+) = 2-C-methyl-D-erythritol 2,4-cyclic diphosphate + reduced [flavodoxin]. It functions in the pathway isoprenoid biosynthesis; isopentenyl diphosphate biosynthesis via DXP pathway; isopentenyl diphosphate from 1-deoxy-D-xylulose 5-phosphate: step 5/6. Converts 2C-methyl-D-erythritol 2,4-cyclodiphosphate (ME-2,4cPP) into 1-hydroxy-2-methyl-2-(E)-butenyl 4-diphosphate. The protein is 4-hydroxy-3-methylbut-2-en-1-yl diphosphate synthase (flavodoxin) of Dinoroseobacter shibae (strain DSM 16493 / NCIMB 14021 / DFL 12).